A 405-amino-acid polypeptide reads, in one-letter code: L-rhamnonate dehydratase (405 aa).

2 residues coordinate substrate: H33 and R59. Mg(2+)-binding residues include D226, E252, and E280. The Proton acceptor role is filled by H329. E349 is a binding site for substrate.

This sequence belongs to the mandelate racemase/muconate lactonizing enzyme family. RhamD subfamily. Homooctamer; tetramer of dimers. The cofactor is Mg(2+).

The catalysed reaction is L-rhamnonate = 2-dehydro-3-deoxy-L-rhamnonate + H2O. Its function is as follows. Catalyzes the dehydration of L-rhamnonate to 2-keto-3-deoxy-L-rhamnonate (KDR). This is L-rhamnonate dehydratase from Shigella boydii serotype 4 (strain Sb227).